Reading from the N-terminus, the 572-residue chain is MNLHQTVEHEAAAAFAAAGIAGSPVVLQPTKNAEHGDFQINGVMGAAKKAKQNPRELAQKVADALAGNAVIESAEVAGPGFINLRLRHEFLAQNIHAALNDARFGVAKTAQPQTVVIDYSSPNLAKEMHVGHLRSSIIGDSISRVLEFTGNTVIRQNHVGDWGTQFGMLVAYLVEQQKDNAAFELADLEQFYRAAKVRFDEDPAFADTAREYVVKLQGGDETVLALWKQFVDISLSHAQAVYDTLGLKLRPEDVAGESKYNDDLQPVADDLVQKGLAVEDDGAKVVFLDEFKNKEGEPAAFIVQKQGGGFLYASTDLACLRYRIGRLKAGRLLYVVDHRQALHFEQLFTTSRKAGYLPENAKAEFIGFGTMMGKDGKPFKTRSGDTVKLVDLLTEAVERATALVKEKNPELGADEAAKIGKTVGIGAVKYADLSKNRTSDYVFDWDAMLSFEGNTAPYLQYAYTRVQSVFRKAGEWDATAPTVLTEPLEKQLAAELLKFENVLQSVADTAYPHYLAAYLYQAATLFSRFYEACPILKAEGASRNSRLQLAKLTGNTLKQGLDLLGIDVLDVM.

The 'HIGH' region motif lies at 122 to 132 (PNLAKEMHVGH).

This sequence belongs to the class-I aminoacyl-tRNA synthetase family. As to quaternary structure, monomer.

It is found in the cytoplasm. The catalysed reaction is tRNA(Arg) + L-arginine + ATP = L-arginyl-tRNA(Arg) + AMP + diphosphate. The sequence is that of Arginine--tRNA ligase from Neisseria gonorrhoeae (strain NCCP11945).